We begin with the raw amino-acid sequence, 205 residues long: Ras-related protein Rab-1A (205 aa).

GTP-binding positions include 18–26, 36–43, 66–70, 124–127, and 154–156; these read GDSGVGKSC, YTESYIST, DTAGQ, NKSD, and SAK. The Effector region signature appears at 40–48; the sequence is YISTIGVDF. Over residues 183–198 the composition is skewed to polar residues; the sequence is SDSKPSVKINSSTPVS. The tract at residues 183–205 is disordered; it reads SDSKPSVKINSSTPVSANKGGCC. 2 S-geranylgeranyl cysteine lipidation sites follow: Cys204 and Cys205.

It belongs to the small GTPase superfamily. Rab family.

The protein resides in the golgi apparatus. Its subcellular location is the endoplasmic reticulum. Probably required for transit of protein from the ER through Golgi compartment. The sequence is that of Ras-related protein Rab-1A (RAB1A) from Lymnaea stagnalis (Great pond snail).